The chain runs to 206 residues: Histidine biosynthesis bifunctional protein HisIE (206 aa).

The phosphoribosyl-AMP cyclohydrolase stretch occupies residues 1–117 (MGSETTAAGD…SCFPTAPSQF (117 aa)). The segment at 118-206 (LGSLDALIAE…AVALLESRHK (89 aa)) is phosphoribosyl-ATP pyrophosphohydrolase.

It in the N-terminal section; belongs to the PRA-CH family. The protein in the C-terminal section; belongs to the PRA-PH family.

The protein resides in the cytoplasm. The catalysed reaction is 1-(5-phospho-beta-D-ribosyl)-ATP + H2O = 1-(5-phospho-beta-D-ribosyl)-5'-AMP + diphosphate + H(+). It carries out the reaction 1-(5-phospho-beta-D-ribosyl)-5'-AMP + H2O = 1-(5-phospho-beta-D-ribosyl)-5-[(5-phospho-beta-D-ribosylamino)methylideneamino]imidazole-4-carboxamide. The protein operates within amino-acid biosynthesis; L-histidine biosynthesis; L-histidine from 5-phospho-alpha-D-ribose 1-diphosphate: step 2/9. It functions in the pathway amino-acid biosynthesis; L-histidine biosynthesis; L-histidine from 5-phospho-alpha-D-ribose 1-diphosphate: step 3/9. In Xanthomonas campestris pv. campestris (strain ATCC 33913 / DSM 3586 / NCPPB 528 / LMG 568 / P 25), this protein is Histidine biosynthesis bifunctional protein HisIE.